Here is a 251-residue protein sequence, read N- to C-terminus: Cell division protein ZapD (251 aa).

This sequence belongs to the ZapD family. In terms of assembly, interacts with FtsZ.

It is found in the cytoplasm. Functionally, cell division factor that enhances FtsZ-ring assembly. Directly interacts with FtsZ and promotes bundling of FtsZ protofilaments, with a reduction in FtsZ GTPase activity. This is Cell division protein ZapD from Burkholderia mallei (strain NCTC 10247).